Here is a 136-residue protein sequence, read N- to C-terminus: Large-conductance mechanosensitive channel (136 aa).

The next 2 helical transmembrane spans lie at 9 to 29 and 79 to 99; these read AFAS…GAAF and IQTI…VKAI.

The protein belongs to the MscL family. In terms of assembly, homopentamer.

It is found in the cell inner membrane. Functionally, channel that opens in response to stretch forces in the membrane lipid bilayer. May participate in the regulation of osmotic pressure changes within the cell. This chain is Large-conductance mechanosensitive channel, found in Shewanella baltica (strain OS223).